Reading from the N-terminus, the 189-residue chain is Large ribosomal subunit protein bL17 (189 aa).

A disordered region spans residues aspartate 126–asparagine 189. The segment covering glutamine 139–aspartate 180 has biased composition (low complexity).

The protein belongs to the bacterial ribosomal protein bL17 family. In terms of assembly, part of the 50S ribosomal subunit. Contacts protein L32.

The chain is Large ribosomal subunit protein bL17 from Mycobacterium marinum (strain ATCC BAA-535 / M).